A 333-amino-acid polypeptide reads, in one-letter code: Cytochrome f (333 aa).

Positions 1–16 are cleaved as a signal peptide; that stretch reads MRNVFRTARLTRSARA. The helical transmembrane segment at 17 to 36 threads the bilayer; the sequence is IVKTLLIAIATVTFYFTSDL. Heme-binding residues include Y45, C66, C69, and H70. The chain crosses the membrane as a helical span at residues 299–319; sequence VKWMIAFVALVMLAQVMLVLK.

Belongs to the cytochrome f family. As to quaternary structure, the 4 large subunits of the cytochrome b6-f complex are cytochrome b6, subunit IV (17 kDa polypeptide, PetD), cytochrome f and the Rieske protein, while the 4 small subunits are PetG, PetL, PetM and PetN. The complex functions as a dimer. Requires heme as cofactor.

Its subcellular location is the cellular thylakoid membrane. Functionally, component of the cytochrome b6-f complex, which mediates electron transfer between photosystem II (PSII) and photosystem I (PSI), cyclic electron flow around PSI, and state transitions. This chain is Cytochrome f, found in Nostoc punctiforme (strain ATCC 29133 / PCC 73102).